Consider the following 207-residue polypeptide: 3-demethoxyubiquinol 3-hydroxylase (207 aa).

Over residues 22-32 (ERANPADRLAP) the composition is skewed to basic and acidic residues. The segment at 22-41 (ERANPADRLAPETEQMNPEE) is disordered. Fe cation-binding residues include Glu-56, Glu-86, His-89, Glu-138, Glu-170, and His-173.

Belongs to the COQ7 family. It depends on Fe cation as a cofactor.

The protein resides in the cell membrane. It carries out the reaction a 5-methoxy-2-methyl-3-(all-trans-polyprenyl)benzene-1,4-diol + AH2 + O2 = a 3-demethylubiquinol + A + H2O. The protein operates within cofactor biosynthesis; ubiquinone biosynthesis. Its function is as follows. Catalyzes the hydroxylation of 2-nonaprenyl-3-methyl-6-methoxy-1,4-benzoquinol during ubiquinone biosynthesis. This Cupriavidus metallidurans (strain ATCC 43123 / DSM 2839 / NBRC 102507 / CH34) (Ralstonia metallidurans) protein is 3-demethoxyubiquinol 3-hydroxylase.